The following is a 393-amino-acid chain: Exosome complex component RRP45 (393 aa).

Positions 1–268 (MRDTPLSNCE…SEITELINKA (268 aa)) are ARE binding.

This sequence belongs to the RNase PH family. Component of the RNA exosome complex.

The protein localises to the cytoplasm. It is found in the nucleus. Its subcellular location is the nucleolus. It localises to the nucleoplasm. Its function is as follows. Non-catalytic component of the RNA exosome complex which has 3'-&gt;5' exoribonuclease activity and participates in a multitude of cellular RNA processing and degradation events. In the nucleus, the RNA exosome complex is involved in proper maturation of stable RNA species such as rRNA, snRNA and snoRNA, in the elimination of RNA processing by-products and non-coding 'pervasive' transcripts, such as antisense RNA species and promoter-upstream transcripts (PROMPTs), and of mRNAs with processing defects, thereby limiting or excluding their export to the cytoplasm. In the cytoplasm, the RNA exosome complex is involved in general mRNA turnover and specifically degrades inherently unstable mRNAs containing AU-rich elements (AREs) within their 3' untranslated regions, and in RNA surveillance pathways, preventing translation of aberrant mRNAs. This Danio rerio (Zebrafish) protein is Exosome complex component RRP45.